Reading from the N-terminus, the 429-residue chain is Glutamate-1-semialdehyde 2,1-aminomutase 2 (429 aa).

K268 carries the N6-(pyridoxal phosphate)lysine modification.

It belongs to the class-III pyridoxal-phosphate-dependent aminotransferase family. HemL subfamily. Homodimer. Requires pyridoxal 5'-phosphate as cofactor.

The protein resides in the cytoplasm. It carries out the reaction (S)-4-amino-5-oxopentanoate = 5-aminolevulinate. It functions in the pathway porphyrin-containing compound metabolism; protoporphyrin-IX biosynthesis; 5-aminolevulinate from L-glutamyl-tRNA(Glu): step 2/2. This Bacillus thuringiensis (strain Al Hakam) protein is Glutamate-1-semialdehyde 2,1-aminomutase 2.